We begin with the raw amino-acid sequence, 515 residues long: Protein disulfide-isomerase (515 aa).

Positions 1–22 (MAVVRVRAIVALLCLVAALGLA) are cleaved as a signal peptide. Thioredoxin domains follow at residues 23 to 139 (EPLE…KRTG) and 351 to 480 (FLEG…SGGQ). Catalysis depends on nucleophile residues Cys-58, Cys-61, Cys-402, and Cys-405. 2 disulfide bridges follow: Cys-58–Cys-61 and Cys-402–Cys-405. A disordered region spans residues 477–515 (SGGQDGAAADDDLEDLETDEETDLEEGDDDEQKIQKDEL). The segment covering 484–507 (AADDDLEDLETDEETDLEEGDDDE) has biased composition (acidic residues). The Prevents secretion from ER signature appears at 512–515 (KDEL).

Belongs to the protein disulfide isomerase family. Heterodimer; heterodimerizes with the protein microsomal triglyceride transfer MTTP. Homodimer. Monomers and homotetramers may also occur. Also constitutes the structural subunit of prolyl 4-hydroxylase. Stabilizes this enzyme and retains it in the ER without contributing to the catalytic activity. Binds UBQLN1.

It is found in the endoplasmic reticulum. The protein localises to the endoplasmic reticulum lumen. Its subcellular location is the cell membrane. It carries out the reaction Catalyzes the rearrangement of -S-S- bonds in proteins.. This multifunctional protein catalyzes the formation, breakage and rearrangement of disulfide bonds. At the cell surface, seems to act as a reductase that cleaves disulfide bonds of proteins attached to the cell. May therefore cause structural modifications of exofacial proteins. Inside the cell, seems to form/rearrange disulfide bonds of nascent proteins. At high concentrations, functions as a chaperone that inhibits aggregation of misfolded proteins. At low concentrations, facilitates aggregation (anti-chaperone activity). Also acts a structural subunit of various enzymes such as prolyl 4-hydroxylase. The polypeptide is Protein disulfide-isomerase (P4HB) (Gallus gallus (Chicken)).